The sequence spans 106 residues: Probable NADP-dependent dehydrogenase in aabA 3'region (106 aa).

Leu4 to Ile28 contributes to the NADP(+) binding site.

This sequence belongs to the short-chain dehydrogenases/reductases (SDR) family.

The chain is Probable NADP-dependent dehydrogenase in aabA 3'region from Dichelobacter nodosus (Bacteroides nodosus).